The sequence spans 270 residues: uncharacterized protein (270 aa).

The protein belongs to the GSP E family.

This is an uncharacterized protein from Methanocaldococcus jannaschii (strain ATCC 43067 / DSM 2661 / JAL-1 / JCM 10045 / NBRC 100440) (Methanococcus jannaschii).